We begin with the raw amino-acid sequence, 158 residues long: uncharacterized protein (158 aa).

A helical transmembrane segment spans residues 33-53; that stretch reads VLAAVPQLGAAKVLVLLLLGV.

It localises to the membrane. This is an uncharacterized protein from Saccharomyces cerevisiae (strain ATCC 204508 / S288c) (Baker's yeast).